A 147-amino-acid polypeptide reads, in one-letter code: uncharacterized protein (147 aa).

This is an uncharacterized protein from Mycoplasma pneumoniae (strain ATCC 29342 / M129 / Subtype 1) (Mycoplasmoides pneumoniae).